The sequence spans 89 residues: Small ribosomal subunit protein uS15 (89 aa).

This sequence belongs to the universal ribosomal protein uS15 family. In terms of assembly, part of the 30S ribosomal subunit. Forms a bridge to the 50S subunit in the 70S ribosome, contacting the 23S rRNA.

One of the primary rRNA binding proteins, it binds directly to 16S rRNA where it helps nucleate assembly of the platform of the 30S subunit by binding and bridging several RNA helices of the 16S rRNA. Its function is as follows. Forms an intersubunit bridge (bridge B4) with the 23S rRNA of the 50S subunit in the ribosome. This chain is Small ribosomal subunit protein uS15, found in Bdellovibrio bacteriovorus (strain ATCC 15356 / DSM 50701 / NCIMB 9529 / HD100).